The sequence spans 264 residues: Glutamate racemase (264 aa).

Residues 10 to 11 (DS) and 42 to 43 (YG) each bind substrate. C73 acts as the Proton donor/acceptor in catalysis. A substrate-binding site is contributed by 74 to 75 (NT). The active-site Proton donor/acceptor is the C183. Substrate is bound at residue 184–185 (TH).

This sequence belongs to the aspartate/glutamate racemases family.

The catalysed reaction is L-glutamate = D-glutamate. It functions in the pathway cell wall biogenesis; peptidoglycan biosynthesis. Functionally, provides the (R)-glutamate required for cell wall biosynthesis. This chain is Glutamate racemase, found in Streptococcus pyogenes serotype M49 (strain NZ131).